A 497-amino-acid chain; its full sequence is Inactive metallocarboxypeptidase ecm14 (497 aa).

The first 28 residues, 1–28 (MAYNKSLKSLVFILLASQIVFVLFLCYG), serve as a signal peptide directing secretion. A propeptide spanning residues 29-148 (KSSRELGVKW…TLFESIVPDT (120 aa)) is cleaved from the precursor. The Peptidase M14 domain occupies 182 to 492 (SYQNLESINS…AMILYYGEFI (311 aa)). Residues histidine 248 and glutamate 251 each coordinate Zn(2+). Substrate-binding positions include 248–251 (HARE) and 323–324 (DA). A disulfide bond links cysteine 317 and cysteine 337. Histidine 377 serves as a coordination point for Zn(2+). 378-379 (SY) serves as a coordination point for substrate.

The protein belongs to the peptidase M14 family. Zn(2+) is required as a cofactor.

The protein resides in the endoplasmic reticulum. It is found in the secreted. Functionally, inactive carboxypeptidase that may play a role in cell wall organization and biogenesis. In Schizosaccharomyces pombe (strain 972 / ATCC 24843) (Fission yeast), this protein is Inactive metallocarboxypeptidase ecm14.